We begin with the raw amino-acid sequence, 914 residues long: UPF0182 protein PTH_1387 (914 aa).

Transmembrane regions (helical) follow at residues 7-27 (FAAY…IAGA), 48-68 (IIIS…VLLF), 109-129 (LLLL…NFTV), 173-193 (INWV…VVYF), 209-229 (YHFS…YQLE), 252-272 (TLLA…AILI), and 281-301 (LVIY…GIYP).

Belongs to the UPF0182 family.

The protein resides in the cell membrane. The polypeptide is UPF0182 protein PTH_1387 (Pelotomaculum thermopropionicum (strain DSM 13744 / JCM 10971 / SI)).